A 663-amino-acid chain; its full sequence is Drug sensory protein A (663 aa).

Helical transmembrane passes span 32-52 (LMAAATLVVSLLMSGLTFWAV), 165-185 (VFIPLQYQGKFLGVLAIGINP), and 199-219 (VTIAVFISIWVMVILGAVFNA). One can recognise an HAMP domain in the interval 220–272 (LTITQPIKELLLGVKNIAAGNFKQRITLPFGGELGELIVNFNEMAERLERYEA). Residues 281-351 (EKAKLDTLVS…QPLRELAADQ (71 aa)) enclose the PAS domain. The 228-residue stretch at 429–656 (NVSHELRTPL…TFWFDLAVYQ (228 aa)) folds into the Histidine kinase domain. A Phosphohistidine; by autocatalysis modification is found at His432.

It localises to the cell membrane. It carries out the reaction ATP + protein L-histidine = ADP + protein N-phospho-L-histidine.. In Synechocystis sp. (strain ATCC 27184 / PCC 6803 / Kazusa), this protein is Drug sensory protein A (dspA).